The sequence spans 79 residues: CDC42 small effector protein 1-B (79 aa).

Residues Cys10 and Cys11 are each lipidated (S-palmitoyl cysteine). The region spanning Ile30–Gly43 is the CRIB domain. Residues His41–Leu79 are disordered. Positions Met63–Gln72 are enriched in basic and acidic residues.

Belongs to the CDC42SE/SPEC family.

It localises to the cytoplasm. The protein resides in the cytoskeleton. The protein localises to the cell membrane. Probably involved in the organization of the actin cytoskeleton by acting downstream of CDC42, inducing actin filament assembly. This chain is CDC42 small effector protein 1-B (cdc42se1-b), found in Xenopus laevis (African clawed frog).